The chain runs to 747 residues: Probable copper-transporting ATPase PacS (747 aa).

Residues 1–101 (MVNQQTLTLR…RQLAQRVWVS (101 aa)) lie on the Cytoplasmic side of the membrane. One can recognise an HMA domain in the interval 3 to 69 (NQQTLTLRGM…AIEAAGYHAF (67 aa)). A metal cation is bound by residues C14 and C17. Residues 102–122 (GLIASLLVIGSLPMMLGISIP) traverse the membrane as a helical segment. At 123–132 (GIPMWLHHPG) the chain is on the extracellular side. The helical transmembrane segment at 133 to 151 (LQLGLTLPVLWAGRSFFIN) threads the bilayer. Residues 152-158 (AWKAFRQ) are Cytoplasmic-facing. A helical membrane pass occupies residues 159–179 (NTATMDTLVAVGTGAAFLYSL). Residues 180–199 (AVTLFPQWLTRQGLPPDVYY) lie on the Extracellular side of the membrane. Residues 200–220 (EAIAVIIALLLLGRSLEERAK) form a helical membrane-spanning segment. The Cytoplasmic segment spans residues 221–348 (GQTSAAIRQL…KAPIQRLADQ (128 aa)). The helical transmembrane segment at 349-371 (VTGWFVPAVIAIAILTFVLWFNW) threads the bilayer. The Extracellular portion of the chain corresponds to 372-378 (IGNVTLA). Residues 379–396 (LITAVGVLIIACPCALGL) traverse the membrane as a helical segment. The Cytoplasmic segment spans residues 397–688 (ATPTSIMVGT…QLSRATMTNI (292 aa)). D434 (4-aspartylphosphate intermediate) is an active-site residue. The Mg(2+) site is built by D634 and D638. Residues 689–708 (RQNLFFAFIYNVAGIPIAAG) form a helical membrane-spanning segment. At 709 to 720 (ILYPLLGWLLSP) the chain is on the extracellular side. The chain crosses the membrane as a helical span at residues 721–739 (MLAGAAMAFSSVSVVTNAL). Over 740-747 (RLRQFQPR) the chain is Cytoplasmic.

The protein belongs to the cation transport ATPase (P-type) (TC 3.A.3) family. Type IB subfamily.

It localises to the cell membrane. It catalyses the reaction Cu(+)(in) + ATP + H2O = Cu(+)(out) + ADP + phosphate + H(+). Functionally, may play a role in the osmotic adaptation. The sequence is that of Probable copper-transporting ATPase PacS (pacS) from Synechococcus elongatus (strain ATCC 33912 / PCC 7942 / FACHB-805) (Anacystis nidulans R2).